The primary structure comprises 476 residues: Sulfate adenylyltransferase subunit 1 (476 aa).

The tr-type G domain maps to 24 to 241 (KSLLRFLTCG…EDVDFVQEQE (218 aa)). Positions 33-40 (GSVDDGKS) are G1. 33 to 40 (GSVDDGKS) is a binding site for GTP. Positions 91 to 95 (GITID) are G2. The segment at 112-115 (DTPG) is G3. GTP contacts are provided by residues 112-116 (DTPGH) and 167-170 (NKMD). Residues 167–170 (NKMD) form a G4 region. The segment at 205–207 (SAL) is G5.

It belongs to the TRAFAC class translation factor GTPase superfamily. Classic translation factor GTPase family. CysN/NodQ subfamily. As to quaternary structure, heterodimer composed of CysD, the smaller subunit, and CysN.

The enzyme catalyses sulfate + ATP + H(+) = adenosine 5'-phosphosulfate + diphosphate. Its pathway is sulfur metabolism; hydrogen sulfide biosynthesis; sulfite from sulfate: step 1/3. Functionally, with CysD forms the ATP sulfurylase (ATPS) that catalyzes the adenylation of sulfate producing adenosine 5'-phosphosulfate (APS) and diphosphate, the first enzymatic step in sulfur assimilation pathway. APS synthesis involves the formation of a high-energy phosphoric-sulfuric acid anhydride bond driven by GTP hydrolysis by CysN coupled to ATP hydrolysis by CysD. This Photobacterium profundum (strain SS9) protein is Sulfate adenylyltransferase subunit 1.